Here is a 209-residue protein sequence, read N- to C-terminus: dITP/XTP pyrophosphatase (209 aa).

7-12 (SSHGYK) is a binding site for substrate. The active-site Proton acceptor is aspartate 70. Residue aspartate 70 participates in Mg(2+) binding. Substrate is bound by residues serine 71, 154–157 (FGYD), lysine 177, and 182–183 (HR).

It belongs to the HAM1 NTPase family. As to quaternary structure, homodimer. The cofactor is Mg(2+).

It carries out the reaction XTP + H2O = XMP + diphosphate + H(+). The catalysed reaction is dITP + H2O = dIMP + diphosphate + H(+). The enzyme catalyses ITP + H2O = IMP + diphosphate + H(+). Its function is as follows. Pyrophosphatase that catalyzes the hydrolysis of nucleoside triphosphates to their monophosphate derivatives, with a high preference for the non-canonical purine nucleotides XTP (xanthosine triphosphate), dITP (deoxyinosine triphosphate) and ITP. Seems to function as a house-cleaning enzyme that removes non-canonical purine nucleotides from the nucleotide pool, thus preventing their incorporation into DNA/RNA and avoiding chromosomal lesions. This is dITP/XTP pyrophosphatase from Chlamydia muridarum (strain MoPn / Nigg).